The primary structure comprises 339 residues: Ketol-acid reductoisomerase (NADP(+)) (339 aa).

One can recognise a KARI N-terminal Rossmann domain in the interval 1–182; that stretch reads MRVYYDRDAD…GGGRSGIIET (182 aa). NADP(+) is bound by residues 24–27, arginine 48, serine 51, serine 53, and 83–86; these read YGSQ and DELQ. Histidine 108 is an active-site residue. Position 134 (glycine 134) interacts with NADP(+). Positions 183-328 constitute a KARI C-terminal knotted domain; the sequence is TFREECETDL…GRLRAMMPWI (146 aa). Positions 191, 195, 227, and 231 each coordinate Mg(2+). Position 252 (serine 252) interacts with substrate.

This sequence belongs to the ketol-acid reductoisomerase family. Mg(2+) is required as a cofactor.

It carries out the reaction (2R)-2,3-dihydroxy-3-methylbutanoate + NADP(+) = (2S)-2-acetolactate + NADPH + H(+). It catalyses the reaction (2R,3R)-2,3-dihydroxy-3-methylpentanoate + NADP(+) = (S)-2-ethyl-2-hydroxy-3-oxobutanoate + NADPH + H(+). Its pathway is amino-acid biosynthesis; L-isoleucine biosynthesis; L-isoleucine from 2-oxobutanoate: step 2/4. It functions in the pathway amino-acid biosynthesis; L-valine biosynthesis; L-valine from pyruvate: step 2/4. In terms of biological role, involved in the biosynthesis of branched-chain amino acids (BCAA). Catalyzes an alkyl-migration followed by a ketol-acid reduction of (S)-2-acetolactate (S2AL) to yield (R)-2,3-dihydroxy-isovalerate. In the isomerase reaction, S2AL is rearranged via a Mg-dependent methyl migration to produce 3-hydroxy-3-methyl-2-ketobutyrate (HMKB). In the reductase reaction, this 2-ketoacid undergoes a metal-dependent reduction by NADPH to yield (R)-2,3-dihydroxy-isovalerate. The protein is Ketol-acid reductoisomerase (NADP(+)) of Rhodospirillum rubrum (strain ATCC 11170 / ATH 1.1.1 / DSM 467 / LMG 4362 / NCIMB 8255 / S1).